We begin with the raw amino-acid sequence, 1273 residues long: ABC transporter B family member 2 (1273 aa).

A signal peptide spans 1 to 30 (MYISLIFFLSNHFPPLISIPIFIFLSFSSP). 7 helical membrane-spanning segments follow: residues 66–86 (FSFA…GACI), 91–111 (VPIF…AYLF), 126–146 (FVYL…CWMH), 209–229 (FIAG…VTLS), 230–250 (IVPL…GLIA), 305–325 (GLGL…LVWF), and 345–365 (LNVV…SAFV). Residues 77–366 (MTLGSVGACI…AAPDISAFVR (290 aa)) form the ABC transmembrane type-1 1 domain. The region spanning 401-637 (IQFKDATFSY…PDGAYSSLLR (237 aa)) is the ABC transporter 1 domain. 436–443 (GGSGSGKS) contributes to the ATP binding site. N466 and N651 each carry an N-linked (GlcNAc...) asparagine glycan. In terms of domain architecture, ABC transmembrane type-1 2 spans 710-997 (GVCGTICAFI…TLALAPDLLK (288 aa)). The next 2 membrane-spanning stretches (helical) occupy residues 711 to 731 (VCGT…ALGV) and 752 to 772 (IAIL…IEHI). An N-linked (GlcNAc...) asparagine glycan is attached at N806. Helical transmembrane passes span 832 to 852 (ILLQ…ILNW), 934 to 954 (IAGL…GLAL), and 975 to 995 (FMVL…APDL). The region spanning 1030–1266 (IELKGVHFSY…KSGPYFKLIS (237 aa)) is the ABC transporter 2 domain. 1065-1072 (GQSGSGKS) serves as a coordination point for ATP. Residues N1217 and N1256 are each glycosylated (N-linked (GlcNAc...) asparagine).

This sequence belongs to the ABC transporter superfamily. ABCB family. Multidrug resistance exporter (TC 3.A.1.201) subfamily. As to quaternary structure, interacts with 1-naphthylphthalamic acid (NPA).

The protein localises to the membrane. This is ABC transporter B family member 2 (ABCB2) from Arabidopsis thaliana (Mouse-ear cress).